The following is a 285-amino-acid chain: (3S)-malyl-CoA thioesterase (285 aa).

2 residues coordinate substrate: R70 and E122. E122 and D148 together coordinate Mg(2+).

Belongs to the HpcH/HpaI aldolase family. In terms of assembly, homodimer or homotrimer. The cofactor is Mg(2+).

The catalysed reaction is (S)-malyl-CoA + H2O = (S)-malate + CoA + H(+). Functionally, catalyzes the hydrolysis of (3S)-malyl-CoA to (3S)-malate and free CoA. Inactive towards beta-methylmalyl-CoA and other CoA esters. In Cereibacter sphaeroides (strain KD131 / KCTC 12085) (Rhodobacter sphaeroides), this protein is (3S)-malyl-CoA thioesterase.